Reading from the N-terminus, the 181-residue chain is Epidermin decarboxylase (181 aa).

Residue His67 is part of the active site.

This sequence belongs to the HFCD (homooligomeric flavin containing Cys decarboxylase) superfamily. Homododecamer. It depends on FMN as a cofactor.

Its function is as follows. Catalyzes the removal of two reducing equivalents (oxidative decarboxylation) from the cysteine residue of the C-terminal meso-lanthionine of epidermin to form a --C==C-- double bond. In Staphylococcus epidermidis, this protein is Epidermin decarboxylase (epiD).